The following is a 180-amino-acid chain: Putative peroxiredoxin YkuU (180 aa).

The region spanning 4–165 is the Thioredoxin domain; that stretch reads RMVGKQAPRF…TLRVLQALQT (162 aa). Cysteine 52 functions as the Cysteine sulfenic acid (-SOH) intermediate in the catalytic mechanism.

It belongs to the peroxiredoxin family. AhpC/Prx1 subfamily. In terms of assembly, homodimer; disulfide-linked, upon oxidation.

The protein localises to the cytoplasm. It catalyses the reaction a hydroperoxide + [protein]-dithiol = [protein]-disulfide + an alcohol + H2O. In terms of biological role, thiol-specific peroxidase that catalyzes the reduction of hydrogen peroxide and organic hydroperoxides to water and alcohols, respectively. Plays a role in cell protection against oxidative stress by detoxifying peroxides. The sequence is that of Putative peroxiredoxin YkuU (ykuU) from Bacillus subtilis (strain 168).